The sequence spans 96 residues: Putative membrane protein insertion efficiency factor (96 aa).

Residues T71–P84 are compositionally biased toward low complexity. Residues T71–P96 form a disordered region.

It belongs to the UPF0161 family.

The protein localises to the cell inner membrane. In terms of biological role, could be involved in insertion of integral membrane proteins into the membrane. This is Putative membrane protein insertion efficiency factor from Cupriavidus metallidurans (strain ATCC 43123 / DSM 2839 / NBRC 102507 / CH34) (Ralstonia metallidurans).